A 636-amino-acid chain; its full sequence is 1-deoxy-D-xylulose-5-phosphate synthase (636 aa).

Residues histidine 74 and 115 to 117 (GHA) contribute to the thiamine diphosphate site. Aspartate 146 serves as a coordination point for Mg(2+). Residues 147–148 (GA), asparagine 175, tyrosine 285, and glutamate 368 contribute to the thiamine diphosphate site. Mg(2+) is bound at residue asparagine 175.

The protein belongs to the transketolase family. DXPS subfamily. As to quaternary structure, homodimer. Mg(2+) is required as a cofactor. It depends on thiamine diphosphate as a cofactor.

The enzyme catalyses D-glyceraldehyde 3-phosphate + pyruvate + H(+) = 1-deoxy-D-xylulose 5-phosphate + CO2. It participates in metabolic intermediate biosynthesis; 1-deoxy-D-xylulose 5-phosphate biosynthesis; 1-deoxy-D-xylulose 5-phosphate from D-glyceraldehyde 3-phosphate and pyruvate: step 1/1. Its function is as follows. Catalyzes the acyloin condensation reaction between C atoms 2 and 3 of pyruvate and glyceraldehyde 3-phosphate to yield 1-deoxy-D-xylulose-5-phosphate (DXP). This is 1-deoxy-D-xylulose-5-phosphate synthase from Anaeromyxobacter dehalogenans (strain 2CP-1 / ATCC BAA-258).